The chain runs to 374 residues: Diels-Alderase fsa2 (374 aa).

Residues methionine 1 to tryptophan 216 form a beta-sandwich motif region. A beta-barrel motif region spans residues tryptophan 216–serine 374.

This sequence belongs to the Diels-Alderase family.

It carries out the reaction (5S)-3-[(2E,6R,8E,10E,12E)-2,6-dimethyltetradeca-2,8,10,12-tetraenoyl]-5-(hydroxymethyl)pyrrolidine-2,4-dione = trichosetin. It functions in the pathway mycotoxin biosynthesis. Its function is as follows. Diels-Alderase; part of the gene cluster that mediates the biosynthesis of the HIV-1 integrase inhibitor equisetin and of fusarisetin A, both trans-fused decalin-containing tetramic acids showing also antimicrobial activity. The PKS module of fsa1 together with the enoylreductase fsa3 catalyze the formation of the polyketide unit which is then conjugated to L-serine by the condensation domain of the fsa1 NRPS module. Activity of the Dieckmann cyclase domain (RED) results in release of the Dieckmann product intermediate. Diels-Alderase fsa2 is involved in endo-selective Diels-Alder cycloaddition to form the decalin ring, leading to the production of N-desmethylequisetin also called trichosetin. Subsequent N-methylation is carried out by fsa4 to give equisetin. The enzymatic gene responsible for the conversion of equisetin to fusarisetin A has not been identified yet and is probably located outside of the fsa cluster. The polypeptide is Diels-Alderase fsa2 (Fusarium sp. (strain FN080326)).